The primary structure comprises 142 residues: Large ribosomal subunit protein uL13 (142 aa).

The protein belongs to the universal ribosomal protein uL13 family. In terms of assembly, part of the 50S ribosomal subunit.

Its function is as follows. This protein is one of the early assembly proteins of the 50S ribosomal subunit, although it is not seen to bind rRNA by itself. It is important during the early stages of 50S assembly. The protein is Large ribosomal subunit protein uL13 of Glaesserella parasuis serovar 5 (strain SH0165) (Haemophilus parasuis).